We begin with the raw amino-acid sequence, 384 residues long: Probable inactive linolenate hydroperoxide lyase (384 aa).

Cys-346 is a binding site for heme.

It belongs to the cytochrome P450 family. Heme is required as a cofactor. As to expression, expressed in roots, leaves, flowers and siliques.

The protein is Probable inactive linolenate hydroperoxide lyase of Arabidopsis thaliana (Mouse-ear cress).